A 520-amino-acid polypeptide reads, in one-letter code: Bifunctional purine biosynthesis protein PurH (520 aa).

Residues 1–150 (MSDDRKAIKR…KNHPSVAVVV (150 aa)) enclose the MGS-like domain.

It belongs to the PurH family.

The catalysed reaction is (6R)-10-formyltetrahydrofolate + 5-amino-1-(5-phospho-beta-D-ribosyl)imidazole-4-carboxamide = 5-formamido-1-(5-phospho-D-ribosyl)imidazole-4-carboxamide + (6S)-5,6,7,8-tetrahydrofolate. The enzyme catalyses IMP + H2O = 5-formamido-1-(5-phospho-D-ribosyl)imidazole-4-carboxamide. It functions in the pathway purine metabolism; IMP biosynthesis via de novo pathway; 5-formamido-1-(5-phospho-D-ribosyl)imidazole-4-carboxamide from 5-amino-1-(5-phospho-D-ribosyl)imidazole-4-carboxamide (10-formyl THF route): step 1/1. It participates in purine metabolism; IMP biosynthesis via de novo pathway; IMP from 5-formamido-1-(5-phospho-D-ribosyl)imidazole-4-carboxamide: step 1/1. The protein is Bifunctional purine biosynthesis protein PurH of Corynebacterium glutamicum (strain ATCC 13032 / DSM 20300 / JCM 1318 / BCRC 11384 / CCUG 27702 / LMG 3730 / NBRC 12168 / NCIMB 10025 / NRRL B-2784 / 534).